We begin with the raw amino-acid sequence, 306 residues long: Agmatinase (306 aa).

Mn(2+) contacts are provided by His126, Asp149, His151, Asp153, Asp230, and Asp232.

The protein belongs to the arginase family. Agmatinase subfamily. Requires Mn(2+) as cofactor.

It carries out the reaction agmatine + H2O = urea + putrescine. It functions in the pathway amine and polyamine biosynthesis; putrescine biosynthesis via agmatine pathway; putrescine from agmatine: step 1/1. Functionally, catalyzes the formation of putrescine from agmatine. This Escherichia coli (strain K12 / DH10B) protein is Agmatinase.